The chain runs to 455 residues: Phosphoglucosamine mutase (455 aa).

Serine 104 (phosphoserine intermediate) is an active-site residue. Positions 104, 253, 255, and 257 each coordinate Mg(2+). Serine 104 carries the phosphoserine modification.

This sequence belongs to the phosphohexose mutase family. Requires Mg(2+) as cofactor. Post-translationally, activated by phosphorylation.

The enzyme catalyses alpha-D-glucosamine 1-phosphate = D-glucosamine 6-phosphate. In terms of biological role, catalyzes the conversion of glucosamine-6-phosphate to glucosamine-1-phosphate. The polypeptide is Phosphoglucosamine mutase (Psychrobacter arcticus (strain DSM 17307 / VKM B-2377 / 273-4)).